A 146-amino-acid chain; its full sequence is Anti-sigma F factor (146 aa).

This sequence belongs to the anti-sigma-factor family.

The enzyme catalyses L-seryl-[protein] + ATP = O-phospho-L-seryl-[protein] + ADP + H(+). The catalysed reaction is L-threonyl-[protein] + ATP = O-phospho-L-threonyl-[protein] + ADP + H(+). In terms of biological role, binds to sigma F and blocks its ability to form an RNA polymerase holoenzyme (E-sigma F). Phosphorylates SpoIIAA on a serine residue. This phosphorylation may enable SpoIIAA to act as an anti-anti-sigma factor that counteracts SpoIIAB and thus releases sigma F from inhibition. In Geobacillus thermodenitrificans (strain NG80-2), this protein is Anti-sigma F factor.